The following is a 263-amino-acid chain: Lens fiber major intrinsic protein (263 aa).

Residues 1–9 lie on the Cytoplasmic side of the membrane; the sequence is MWELRSASF. The chain crosses the membrane as a helical span at residues 10–29; sequence WRAIFAEFFATLFYVFFGLG. At 30 to 41 the chain is on the extracellular side; that stretch reads ASLRWAPGPLHV. The chain crosses the membrane as a helical span at residues 42–59; sequence LQVALAFGLALATLVQAV. At 60-61 the chain is on the cytoplasmic side; the sequence is GH. Residues 62-77 constitute an intramembrane region (discontinuously helical); it reads ISGAHVNPAVTFAFLV. Residues 68–70 carry the NPA 1 motif; it reads NPA. Residues 78–82 are Cytoplasmic-facing; sequence GSQMS. The helical transmembrane segment at 83-106 threads the bilayer; that stretch reads LLRAICYMAAQLLGAVAGAAVLYS. Residues 107–127 lie on the Extracellular side of the membrane; it reads VTPAAVRGNLALNTLHPGVSL. A helical membrane pass occupies residues 128–148; it reads GQATTVEIFLTLQFVLCIFAT. The Cytoplasmic segment spans residues 149–156; sequence YDERRNGR. A helical membrane pass occupies residues 157–175; that stretch reads LGSVALAVGFSLTLGHLFG. Residues 176-178 are Extracellular-facing; sequence MYY. The segment at residues 179–193 is an intramembrane region (discontinuously helical); the sequence is TGAGMNPARSFAPAI. The short motif at 184-186 is the NPA 2 element; it reads NPA. The Extracellular segment spans residues 194–200; sequence LTRNFTN. Residues 201-222 traverse the membrane as a helical segment; the sequence is HWVYWVGPIIGGGLASLLYDFL. Residues 223-263 are Cytoplasmic-facing; it reads LFPRLKSVSERLSILKGARPSDSNGQPEGTGEPVELKTQAL. The interval 227–237 is interaction with CALM; that stretch reads LKSVSERLSIL. A phosphoserine mark is found at serine 235, serine 243, and serine 245. Residues 240–263 are disordered; sequence ARPSDSNGQPEGTGEPVELKTQAL. Asparagine 246 is subject to Deamidated asparagine.

This sequence belongs to the MIP/aquaporin (TC 1.A.8) family. Homotetramer; each monomer provides an independent water pore. Two homotetramers on opposing membranes can dimerize, forming a cell-cell junction. Interacts with CALM; the calcium-calmodulin/CALM complex interacts with the cytoplasmic domains of two aquaporins, leading to channel closure. Interacts with BFSP1 (via C-terminus); prevents calcium-dependent inhibition of the water channel activity. In terms of processing, subject to partial proteolytic cleavage in the eye lens core. Partial proteolysis promotes interactions between tetramers from adjoining membranes. Post-translationally, fatty acylated at Met-1 and Lys-238. The acyl modifications, in decreasing order of ion abundance, are: oleoyl (C18:1) &gt; palmitoyl (C16:0) &gt; stearoyl (C18:0) &gt; eicosenoyl (C20:1) &gt; dihomo-gamma-linolenoyl (C20:3) &gt; palmitoleoyl (C16:1) &gt; eicosadienoyl (C20:2).

The protein localises to the cell membrane. It is found in the cell junction. The catalysed reaction is H2O(in) = H2O(out). The water channel activity is inhibited by calcium through calmodulin/CALM. Its function is as follows. Aquaporins form homotetrameric transmembrane channels, with each monomer independently mediating water transport across the plasma membrane along its osmotic gradient. Specifically expressed in lens fiber cells, this aquaporin is crucial for maintaining lens water homeostasis and transparency. Beyond water permeability, it also acts as a cell-to-cell adhesion molecule, forming thin junctions between lens fiber cells that are essential for maintaining the ordered structure and transparency of the lens. This is Lens fiber major intrinsic protein from Oryctolagus cuniculus (Rabbit).